The primary structure comprises 312 residues: UDP-N-acetylenolpyruvoylglucosamine reductase (312 aa).

The 169-residue stretch at 37-205 folds into the FAD-binding PCMH-type domain; that stretch reads VGGPADALVV…VCAEFALCPG (169 aa). The active site involves R185. S234 (proton donor) is an active-site residue. E304 is a catalytic residue.

Belongs to the MurB family. Requires FAD as cofactor.

The protein localises to the cytoplasm. It catalyses the reaction UDP-N-acetyl-alpha-D-muramate + NADP(+) = UDP-N-acetyl-3-O-(1-carboxyvinyl)-alpha-D-glucosamine + NADPH + H(+). The protein operates within cell wall biogenesis; peptidoglycan biosynthesis. Its function is as follows. Cell wall formation. In Syntrophus aciditrophicus (strain SB), this protein is UDP-N-acetylenolpyruvoylglucosamine reductase.